Here is an 89-residue protein sequence, read N- to C-terminus: Small ribosomal subunit protein uS15 (89 aa).

It belongs to the universal ribosomal protein uS15 family. In terms of assembly, part of the 30S ribosomal subunit. Forms a bridge to the 50S subunit in the 70S ribosome, contacting the 23S rRNA.

In terms of biological role, one of the primary rRNA binding proteins, it binds directly to 16S rRNA where it helps nucleate assembly of the platform of the 30S subunit by binding and bridging several RNA helices of the 16S rRNA. Its function is as follows. Forms an intersubunit bridge (bridge B4) with the 23S rRNA of the 50S subunit in the ribosome. The sequence is that of Small ribosomal subunit protein uS15 from Agrobacterium fabrum (strain C58 / ATCC 33970) (Agrobacterium tumefaciens (strain C58)).